A 97-amino-acid polypeptide reads, in one-letter code: Protein 9b (97 aa).

One can recognise a 9b domain in the interval 8-97; it reads VLPALHLVDP…PDEFVVVTAK (90 aa).

The protein belongs to the coronavirus group 2 protein 9b family. Homodimer.

Its subcellular location is the host cytoplasmic vesicle membrane. It localises to the host cytoplasm. This Rhinolophus ferrumequinum (Greater horseshoe bat) protein is Protein 9b.